A 208-amino-acid chain; its full sequence is Small ribosomal subunit protein uS4 (208 aa).

The 63-residue stretch at 95–157 (RRIDNIVYRA…DSLKKLIRSN (63 aa)) folds into the S4 RNA-binding domain.

This sequence belongs to the universal ribosomal protein uS4 family. Part of the 30S ribosomal subunit. Contacts protein S5. The interaction surface between S4 and S5 is involved in control of translational fidelity.

In terms of biological role, one of the primary rRNA binding proteins, it binds directly to 16S rRNA where it nucleates assembly of the body of the 30S subunit. With S5 and S12 plays an important role in translational accuracy. The polypeptide is Small ribosomal subunit protein uS4 (Borrelia garinii subsp. bavariensis (strain ATCC BAA-2496 / DSM 23469 / PBi) (Borreliella bavariensis)).